A 375-amino-acid polypeptide reads, in one-letter code: Formate dehydrogenase (375 aa).

I94 and N120 together coordinate substrate. Residues 175–176 (RI), D196, 231–235 (PLHEK), T257, D283, 312–315 (HMSG), and S358 each bind NAD(+).

Belongs to the D-isomer specific 2-hydroxyacid dehydrogenase family. FDH subfamily. In terms of assembly, homodimer.

It is found in the cytoplasm. It carries out the reaction formate + NAD(+) = CO2 + NADH. In terms of biological role, catalyzes the NAD(+)-dependent oxidation of formate to carbon dioxide. Formate oxidation is the final step in the methanol oxidation pathway in methylotrophic microorganisms. Has a role in the detoxification of exogenous formate in non-methylotrophic organisms. The sequence is that of Formate dehydrogenase from Neurospora crassa (strain ATCC 24698 / 74-OR23-1A / CBS 708.71 / DSM 1257 / FGSC 987).